The primary structure comprises 81 residues: Small ribosomal subunit protein bS16 (81 aa).

Belongs to the bacterial ribosomal protein bS16 family.

This chain is Small ribosomal subunit protein bS16, found in Nautilia profundicola (strain ATCC BAA-1463 / DSM 18972 / AmH).